Here is a 421-residue protein sequence, read N- to C-terminus: ATP-dependent RNA helicase RhlB (421 aa).

A Q motif motif is present at residues 9–37 (QKFSDFALHPKVVEALEKKGFHNCTPIQA). The 180-residue stretch at 40 to 219 (LPLTLAGRDV…FEQMNNAEYI (180 aa)) folds into the Helicase ATP-binding domain. An ATP-binding site is contributed by 53 to 60 (AQTGTGKT). A DEAD box motif is present at residues 165–168 (DEAD). In terms of domain architecture, Helicase C-terminal spans 245 to 390 (RLLQTLIEEE…VSKYNPDALM (146 aa)). The disordered stretch occupies residues 392–421 (DLPKPLRLTRPRTGNGPRRTGAPRNRRRSG). The segment covering 402–414 (PRTGNGPRRTGAP) has biased composition (low complexity).

It belongs to the DEAD box helicase family. RhlB subfamily. As to quaternary structure, component of the RNA degradosome, which is a multiprotein complex involved in RNA processing and mRNA degradation.

The protein localises to the cytoplasm. It carries out the reaction ATP + H2O = ADP + phosphate + H(+). Its function is as follows. DEAD-box RNA helicase involved in RNA degradation. Has RNA-dependent ATPase activity and unwinds double-stranded RNA. This chain is ATP-dependent RNA helicase RhlB, found in Escherichia coli (strain SMS-3-5 / SECEC).